A 151-amino-acid polypeptide reads, in one-letter code: Protein Smg homolog (151 aa).

Belongs to the Smg family.

The polypeptide is Protein Smg homolog (Laribacter hongkongensis (strain HLHK9)).